The chain runs to 420 residues: Succinate--CoA ligase [GDP-forming] subunit beta, mitochondrial (420 aa).

Residues 35-263 (KSLMDKYGVN…NASFRQKEIF (229 aa)) enclose the ATP-grasp domain. Residues glutamine 46, 78–80 (GRG), and valine 135 each bind GTP. Mg(2+) contacts are provided by asparagine 232 and aspartate 246. Residues asparagine 297 and 354 to 356 (GIM) contribute to the substrate site.

Belongs to the succinate/malate CoA ligase beta subunit family. GTP-specific subunit beta subfamily. As to quaternary structure, heterodimer of an alpha and a beta subunit. The beta subunit determines specificity for GTP. Mg(2+) is required as a cofactor.

Its subcellular location is the mitochondrion. It carries out the reaction GTP + succinate + CoA = succinyl-CoA + GDP + phosphate. It participates in carbohydrate metabolism; tricarboxylic acid cycle; succinate from succinyl-CoA (ligase route): step 1/1. Functionally, GTP-specific succinyl-CoA synthetase functions in the citric acid cycle (TCA), coupling the hydrolysis of succinyl-CoA to the synthesis of GTP and thus represents the only step of substrate-level phosphorylation in the TCA. The beta subunit provides nucleotide specificity of the enzyme and binds the substrate succinate, while the binding sites for coenzyme A and phosphate are found in the alpha subunit. The protein is Succinate--CoA ligase [GDP-forming] subunit beta, mitochondrial (scsB) of Dictyostelium discoideum (Social amoeba).